Here is a 224-residue protein sequence, read N- to C-terminus: MTRVSEEAMKDLLSVYFIMGSNNTAGDPLTVIEKALKGGATLFQFREKGEGALKAGDQTAFARQVQALCKQFNVPFIINDDVELALELDADGVHIGQDDDKAADVRARIGDKILGVSAHTLEEVLKAEKDGADYIGAGPVYPTETKRDTKAVQGVSLIQEIRRQGIGIPVVGIGGITVENCVPVIEAGADGISVISAISKAADPKQAAEAFSEKVQATKQSAHS.

Residues 44 to 48 (QFREK) and N79 contribute to the 4-amino-2-methyl-5-(diphosphooxymethyl)pyrimidine site. Residues D80 and D99 each coordinate Mg(2+). A 4-amino-2-methyl-5-(diphosphooxymethyl)pyrimidine-binding site is contributed by S117. 143 to 145 (TET) is a 2-[(2R,5Z)-2-carboxy-4-methylthiazol-5(2H)-ylidene]ethyl phosphate binding site. K146 contributes to the 4-amino-2-methyl-5-(diphosphooxymethyl)pyrimidine binding site. Residues G175 and 195–196 (IS) contribute to the 2-[(2R,5Z)-2-carboxy-4-methylthiazol-5(2H)-ylidene]ethyl phosphate site.

Belongs to the thiamine-phosphate synthase family. Mg(2+) serves as cofactor.

It carries out the reaction 2-[(2R,5Z)-2-carboxy-4-methylthiazol-5(2H)-ylidene]ethyl phosphate + 4-amino-2-methyl-5-(diphosphooxymethyl)pyrimidine + 2 H(+) = thiamine phosphate + CO2 + diphosphate. The enzyme catalyses 2-(2-carboxy-4-methylthiazol-5-yl)ethyl phosphate + 4-amino-2-methyl-5-(diphosphooxymethyl)pyrimidine + 2 H(+) = thiamine phosphate + CO2 + diphosphate. It catalyses the reaction 4-methyl-5-(2-phosphooxyethyl)-thiazole + 4-amino-2-methyl-5-(diphosphooxymethyl)pyrimidine + H(+) = thiamine phosphate + diphosphate. The protein operates within cofactor biosynthesis; thiamine diphosphate biosynthesis; thiamine phosphate from 4-amino-2-methyl-5-diphosphomethylpyrimidine and 4-methyl-5-(2-phosphoethyl)-thiazole: step 1/1. Functionally, condenses 4-methyl-5-(beta-hydroxyethyl)thiazole monophosphate (THZ-P) and 2-methyl-4-amino-5-hydroxymethyl pyrimidine pyrophosphate (HMP-PP) to form thiamine monophosphate (TMP). In Bacillus licheniformis (strain ATCC 14580 / DSM 13 / JCM 2505 / CCUG 7422 / NBRC 12200 / NCIMB 9375 / NCTC 10341 / NRRL NRS-1264 / Gibson 46), this protein is Thiamine-phosphate synthase.